Consider the following 539-residue polypeptide: Alpha-copaene synthase (539 aa).

Mg(2+) is bound by residues Asp290 and Asp294. Asp290, Asp294, and Arg432 together coordinate substrate. Residues 290–294 carry the DDXXD motif motif; it reads DDTFD.

Belongs to the terpene synthase family. As to quaternary structure, monomer. Mg(2+) is required as a cofactor. The cofactor is Mn(2+).

It localises to the cytoplasm. It catalyses the reaction (2E,6E)-farnesyl diphosphate = alpha-copaene + diphosphate. It carries out the reaction (2E,6E)-farnesyl diphosphate = (+)-germacrene D + diphosphate. The catalysed reaction is (2E,6E)-farnesyl diphosphate = (-)-(E)-beta-caryophyllene + diphosphate. The enzyme catalyses (2E,6E)-farnesyl diphosphate = delta-cadinene + diphosphate. The protein operates within secondary metabolite biosynthesis; terpenoid biosynthesis. Its function is as follows. Converts farnesyl diphosphate to the bicyclic olefins alpha-copaene, (E)-beta-caryophyllene, and to the macrocyclic sesquiterpene germacrene D. Also mediates the biosynthesis of minor sesquiterpene hydrocarbons including delta-cadinene. Involved in indirect defense by producing volatile signals attracting natural enemies of herbivores. The sequence is that of Alpha-copaene synthase from Zea mays (Maize).